We begin with the raw amino-acid sequence, 352 residues long: RNA 3'-terminal phosphate cyclase (352 aa).

ATP contacts are provided by residues glutamine 102 and 292–296; that span reads HMGDQ. The active-site Tele-AMP-histidine intermediate is the histidine 318.

Belongs to the RNA 3'-terminal cyclase family. Type 1 subfamily.

The protein resides in the cytoplasm. The enzyme catalyses a 3'-end 3'-phospho-ribonucleotide-RNA + ATP = a 3'-end 2',3'-cyclophospho-ribonucleotide-RNA + AMP + diphosphate. In terms of biological role, catalyzes the conversion of 3'-phosphate to a 2',3'-cyclic phosphodiester at the end of RNA. The mechanism of action of the enzyme occurs in 3 steps: (A) adenylation of the enzyme by ATP; (B) transfer of adenylate to an RNA-N3'P to produce RNA-N3'PP5'A; (C) and attack of the adjacent 2'-hydroxyl on the 3'-phosphorus in the diester linkage to produce the cyclic end product. The biological role of this enzyme is unknown but it is likely to function in some aspects of cellular RNA processing. This Methanopyrus kandleri (strain AV19 / DSM 6324 / JCM 9639 / NBRC 100938) protein is RNA 3'-terminal phosphate cyclase.